A 255-amino-acid polypeptide reads, in one-letter code: Phosphatidylglycerol--prolipoprotein diacylglyceryl transferase (255 aa).

Transmembrane regions (helical) follow at residues Trp-15–Cys-35, Ile-46–Val-66, and Leu-84–Ser-104. Residue Arg-130 coordinates a 1,2-diacyl-sn-glycero-3-phospho-(1'-sn-glycerol). 3 helical membrane passes run Pro-169–Phe-189, Gly-196–Leu-216, and Val-228–Lys-248.

The protein belongs to the Lgt family.

It localises to the cell membrane. The catalysed reaction is L-cysteinyl-[prolipoprotein] + a 1,2-diacyl-sn-glycero-3-phospho-(1'-sn-glycerol) = an S-1,2-diacyl-sn-glyceryl-L-cysteinyl-[prolipoprotein] + sn-glycerol 1-phosphate + H(+). Its pathway is protein modification; lipoprotein biosynthesis (diacylglyceryl transfer). Catalyzes the transfer of the diacylglyceryl group from phosphatidylglycerol to the sulfhydryl group of the N-terminal cysteine of a prolipoprotein, the first step in the formation of mature lipoproteins. The protein is Phosphatidylglycerol--prolipoprotein diacylglyceryl transferase of Clostridium kluyveri (strain NBRC 12016).